Reading from the N-terminus, the 683-residue chain is DNA-directed RNA polymerase subunit beta' (683 aa).

4 residues coordinate Zn(2+): Cys-69, Cys-71, Cys-87, and Cys-90. Mg(2+)-binding residues include Asp-489, Asp-491, and Asp-493.

The protein belongs to the RNA polymerase beta' chain family. RpoC1 subfamily. As to quaternary structure, in plastids the minimal PEP RNA polymerase catalytic core is composed of four subunits: alpha, beta, beta', and beta''. When a (nuclear-encoded) sigma factor is associated with the core the holoenzyme is formed, which can initiate transcription. The cofactor is Mg(2+). Zn(2+) is required as a cofactor.

The protein resides in the plastid. It is found in the chloroplast. The catalysed reaction is RNA(n) + a ribonucleoside 5'-triphosphate = RNA(n+1) + diphosphate. Its function is as follows. DNA-dependent RNA polymerase catalyzes the transcription of DNA into RNA using the four ribonucleoside triphosphates as substrates. This chain is DNA-directed RNA polymerase subunit beta', found in Saccharum hybrid (Sugarcane).